Consider the following 378-residue polypeptide: Ribosomal RNA large subunit methyltransferase G (378 aa).

The protein belongs to the methyltransferase superfamily. RlmG family.

It localises to the cytoplasm. It carries out the reaction guanosine(1835) in 23S rRNA + S-adenosyl-L-methionine = N(2)-methylguanosine(1835) in 23S rRNA + S-adenosyl-L-homocysteine + H(+). Functionally, specifically methylates the guanine in position 1835 (m2G1835) of 23S rRNA. The polypeptide is Ribosomal RNA large subunit methyltransferase G (Salmonella agona (strain SL483)).